A 202-amino-acid polypeptide reads, in one-letter code: Recombination protein RecR (202 aa).

The C4-type zinc-finger motif lies at 56-71 (CRVCGNLDSADPCSVC). The region spanning 79–179 (GLICVVESVG…SVTRLAQGIP (101 aa)) is the Toprim domain.

Belongs to the RecR family.

Functionally, may play a role in DNA repair. It seems to be involved in an RecBC-independent recombinational process of DNA repair. It may act with RecF and RecO. The polypeptide is Recombination protein RecR (Granulibacter bethesdensis (strain ATCC BAA-1260 / CGDNIH1)).